A 132-amino-acid polypeptide reads, in one-letter code: Fatty acid-binding protein, intestinal (132 aa).

At Ala-2 the chain carries N-acetylalanine. Hexadecanoate-binding residues include Trp-83 and Arg-107. Trp-83 and Arg-107 together coordinate tetradecanoate.

The protein belongs to the calycin superfamily. Fatty-acid binding protein (FABP) family. As to expression, expressed in the small intestine. Expression in the mucosal cells of the ileum extends from the midvillar region to the villus tips.

It localises to the cytoplasm. In terms of biological role, FABPs are thought to play a role in the intracellular transport of long-chain fatty acids and their acyl-CoA esters. FABP2 is probably involved in triglyceride-rich lipoprotein synthesis. Binds saturated long-chain fatty acids with a high affinity, but binds with a lower affinity to unsaturated long-chain fatty acids. FABP2 may also help maintain energy homeostasis by functioning as a lipid sensor. The chain is Fatty acid-binding protein, intestinal (Fabp2) from Rattus norvegicus (Rat).